The primary structure comprises 414 residues: MRAHPGGGRCCPEQEEGESAAGGSGAGGDSAIEQGGQGSALAPSPVSGVRREGARGGGRGRGRWKQAARGGGVCGRGRGRGRGRGRGRGRGRGRGRPQSGGSGLGGDGGGGAGGCGGGSGGGVAPRRDPVPFPSGSSGPGPRGPRATESGKRMDCPALPPGWKKEEVIRKSGLSAGKSDVYYFSPSGKKFRSKPQLARYLGNAVDLSSFDFRTGKMMPSKLQKNKQRLRNDPLNQNKGKPDLNTTLPIRQTASIFKQPVTKFTNHPSNKVKSDPQRMNEQPRQLFWEKRLQGLSASDVTEQIIKTMELPKGLQGVGPGSNDETLLSAVASALHTSSAPITGQVSAAVEKNPAVWLNTSQPLCKAFIVTDEDIRKQEERVQQVRKKLEEALMADILSRAADTEEVDIDMDSGDEA.

The segment at 1–152 is required for interaction with DHX9 and PRMT5; the sequence is MRAHPGGGRC…GPRATESGKR (152 aa). The interval 1–163 is disordered; the sequence is MRAHPGGGRC…DCPALPPGWK (163 aa). Over residues 77 to 95 the composition is skewed to basic residues; the sequence is GRGRGRGRGRGRGRGRGRG. The segment covering 98 to 123 has biased composition (gly residues); it reads QSGGSGLGGDGGGGAGGCGGGSGGGV. The MBD domain occupies 148–216; that stretch reads ESGKRMDCPA…SSFDFRTGKM (69 aa). Serine 184 is subject to Phosphoserine. The segment at 217-244 is disordered; the sequence is MPSKLQKNKQRLRNDPLNQNKGKPDLNT. Over residues 232–244 the composition is skewed to polar residues; it reads PLNQNKGKPDLNT. Position 410 is a phosphoserine (serine 410).

As to quaternary structure, heterodimer with MBD3 (via N-terminus). Component of the MeCP1 complex that contains HDAC1 and HDAC2. Component of the nucleosome remodeling and deacetylase (NuRD) repressor complex, composed of core proteins MTA1, MTA2, MTA3, RBBP4, RBBP7, HDAC1, HDAC2, MBD2, MBD3, and peripherally associated proteins CDK2AP1, CDK2AP2, GATAD2A, GATAD2B, CHD3, CHD4 and CHD5. The exact stoichiometry of the NuRD complex is unknown, and some subunits such as MBD2 and MBD3, GATAD2A and GATAD2B, and CHD3, CHD4 and CHD5 define mutually exclusive NuRD complexes. Interacts with CDK2AP1. Interacts with DHX9. Interacts with DNMT1. Interacts with GATAD2A/p66-alpha. Interacts with GATAD2B/p66-beta. Interacts with GPN1. Interacts with MIZF. Interacts with PRMT5. Interacts with SIN3A. Interacts with SPHK2. In terms of tissue distribution, highly expressed in brain, heart, kidney, lung, skeletal muscle, spleen and testis. Detected at lower levels in embryonic stem cells.

It is found in the nucleus. The protein resides in the chromosome. Functionally, binds CpG islands in promoters where the DNA is methylated at position 5 of cytosine within CpG dinucleotides. Binds hemimethylated DNA as well. Recruits histone deacetylases and DNA methyltransferases to chromatin. Acts as a component of the histone deacetylase NuRD complex which participates in the remodeling of chromatin. Acts as transcriptional repressor and plays a role in gene silencing. Functions as a scaffold protein, targeting GATAD2A and GATAD2B to chromatin to promote repression. May enhance the activation of some unmethylated cAMP-responsive promoters. Selectively represses transcription activity of methylated rRNA promoters. This Mus musculus (Mouse) protein is Methyl-CpG-binding domain protein 2.